A 395-amino-acid polypeptide reads, in one-letter code: uncharacterized protein (395 aa).

Positions 115–144 are disordered; sequence TKPPTEGGPEKDQSSPSQTQAAPQGPSTAS. Over residues 128-141 the composition is skewed to low complexity; sequence SSPSQTQAAPQGPS.

This is an uncharacterized protein from Homo sapiens (Human).